The chain runs to 123 residues: Fluoride-specific ion channel FluC 2 (123 aa).

A run of 3 helical transmembrane segments spans residues 30 to 50, 68 to 88, and 93 to 113; these read FPLPTLMINVLGALLLGFVAG, VGFIGSFTTFSTWSVDTVLLL, and WPLALANVGISLAVGLAAVWV. The Na(+) site is built by Gly72 and Thr75.

Belongs to the fluoride channel Fluc/FEX (TC 1.A.43) family.

It localises to the cell membrane. It catalyses the reaction fluoride(in) = fluoride(out). Na(+) is not transported, but it plays an essential structural role and its presence is essential for fluoride channel function. Functionally, fluoride-specific ion channel. Important for reducing fluoride concentration in the cell, thus reducing its toxicity. The polypeptide is Fluoride-specific ion channel FluC 2 (Symbiobacterium thermophilum (strain DSM 24528 / JCM 14929 / IAM 14863 / T)).